Here is a 271-residue protein sequence, read N- to C-terminus: Phosphate import ATP-binding protein PstB 2 (271 aa).

Residues Met-25 to Ile-266 enclose the ABC transporter domain. Gly-57–Ser-64 serves as a coordination point for ATP.

It belongs to the ABC transporter superfamily. Phosphate importer (TC 3.A.1.7) family. As to quaternary structure, the complex is composed of two ATP-binding proteins (PstB), two transmembrane proteins (PstC and PstA) and a solute-binding protein (PstS).

It localises to the cell membrane. It catalyses the reaction phosphate(out) + ATP + H2O = ADP + 2 phosphate(in) + H(+). In terms of biological role, part of the ABC transporter complex PstSACB involved in phosphate import. Responsible for energy coupling to the transport system. The sequence is that of Phosphate import ATP-binding protein PstB 2 from Listeria monocytogenes serotype 4b (strain F2365).